The sequence spans 237 residues: Lectin alpha chain (237 aa).

Positions 8 and 10 each coordinate Mn(2+). The Ca(2+) site is built by Asp-10, Tyr-12, Asn-14, and Asp-19. Tyr-12 contributes to the a carbohydrate binding site. Asp-19, His-24, and Ser-34 together coordinate Mn(2+). Residue 99 to 100 (LY) participates in a carbohydrate binding. Asp-208 is a Ca(2+) binding site. Residue Arg-228 participates in a carbohydrate binding.

Belongs to the leguminous lectin family. As to quaternary structure, homotetramer. Post-translationally, the beta and gamma chains are produced by partial proteolytic processing of the lectin alpha chain by an asparaginyl endopeptidase. Mixture of 60% alpha lectin and 40% of its beta and gamma proteolytic fragments.

Functionally, D-mannose/D-glucose-binding lectin. Has anti-inflammatory activity in rats. Induces histamine release in mast cells from rat. Induces lymphocyte proliferation and IFNG production. Shows toxicity against the aquatic snail B.glabrata at concentrations higher than 50 ug/ml. This Dioclea grandiflora (Mucana) protein is Lectin alpha chain.